The primary structure comprises 944 residues: Bifunctional glutamine synthetase adenylyltransferase/adenylyl-removing enzyme (944 aa).

An adenylyl removase region spans residues 1-440 (MSANSVFQQL…IFTQLIGEDD (440 aa)). Positions 448 to 944 (VSEFKRLWLL…LSSKQKWLDE (497 aa)) are adenylyl transferase.

It belongs to the GlnE family. Mg(2+) serves as cofactor.

It carries out the reaction [glutamine synthetase]-O(4)-(5'-adenylyl)-L-tyrosine + phosphate = [glutamine synthetase]-L-tyrosine + ADP. The enzyme catalyses [glutamine synthetase]-L-tyrosine + ATP = [glutamine synthetase]-O(4)-(5'-adenylyl)-L-tyrosine + diphosphate. Involved in the regulation of glutamine synthetase GlnA, a key enzyme in the process to assimilate ammonia. When cellular nitrogen levels are high, the C-terminal adenylyl transferase (AT) inactivates GlnA by covalent transfer of an adenylyl group from ATP to specific tyrosine residue of GlnA, thus reducing its activity. Conversely, when nitrogen levels are low, the N-terminal adenylyl removase (AR) activates GlnA by removing the adenylyl group by phosphorolysis, increasing its activity. The regulatory region of GlnE binds the signal transduction protein PII (GlnB) which indicates the nitrogen status of the cell. The sequence is that of Bifunctional glutamine synthetase adenylyltransferase/adenylyl-removing enzyme from Proteus mirabilis (strain HI4320).